The primary structure comprises 123 residues: Large ribosomal subunit protein bL12 (123 aa).

The protein belongs to the bacterial ribosomal protein bL12 family. In terms of assembly, homodimer. Part of the ribosomal stalk of the 50S ribosomal subunit. Forms a multimeric L10(L12)X complex, where L10 forms an elongated spine to which 2 to 4 L12 dimers bind in a sequential fashion. Binds GTP-bound translation factors.

Functionally, forms part of the ribosomal stalk which helps the ribosome interact with GTP-bound translation factors. Is thus essential for accurate translation. The polypeptide is Large ribosomal subunit protein bL12 (Haemophilus influenzae (strain 86-028NP)).